The chain runs to 460 residues: DEAD-box helicase Dbp80 (460 aa).

A Phosphoserine modification is found at serine 26. Position 30 is a phosphothreonine (threonine 30). The short motif at 73–101 is the Q motif element; that stretch reads KTFEALHLKASLLKGIYAMGFNTPSKIQE. Positions 106–276 constitute a Helicase ATP-binding domain; the sequence is TLLADPPQNM…RLIVADPTII (171 aa). 119-126 serves as a coordination point for ATP; it reads SQSGTGKT. Residues 223-226 carry the DEAD box motif; the sequence is DEAD. Positions 287-455 constitute a Helicase C-terminal domain; it reads NIKQYYVKCK…VLNTDSADDI (169 aa).

It belongs to the DEAD box helicase family. DDX19/DBP5 subfamily.

It localises to the cytoplasm. It is found in the nucleus. The protein resides in the nucleoplasm. The catalysed reaction is ATP + H2O = ADP + phosphate + H(+). ATP-dependent RNA helicase involved in mRNA export from the nucleus. This Drosophila melanogaster (Fruit fly) protein is DEAD-box helicase Dbp80 (Dbp80).